A 961-amino-acid chain; its full sequence is ATPase 7, plasma membrane-type (961 aa).

The Cytoplasmic segment spans residues 1 to 64 (MTDIEALKAI…EKKESKILKF (64 aa)). The chain crosses the membrane as a helical span at residues 65–84 (LGFMWNPLSWVMEAAALMAI). Residues 85–96 (GLAHGGGKPADY) are Extracellular-facing. Residues 97 to 117 (HDFVGIVVLLLINSTISFVEE) traverse the membrane as a helical segment. Topologically, residues 118–246 (NNAGNAAAAL…GHFQKVLTAI (129 aa)) are cytoplasmic. Residues 247–267 (GNFCICSIAVGMAIEIVVIYG) traverse the membrane as a helical segment. At 268–276 (LQKRGYRVG) the chain is on the extracellular side. The chain crosses the membrane as a helical span at residues 277-294 (IDNLLVLLIGGIPIAMPT). Over 295–643 (VLSVTMAIGA…TSRAIFQRMK (349 aa)) the chain is Cytoplasmic. Catalysis depends on aspartate 332, which acts as the 4-aspartylphosphate intermediate. Mg(2+) contacts are provided by aspartate 588 and aspartate 592. Residues 644–665 (NYTIYAVSITIRIVMGFMLLCV) form a helical membrane-spanning segment. The Extracellular portion of the chain corresponds to 666–670 (FWEFD). The chain crosses the membrane as a helical span at residues 671-693 (FPPFMVLVIAILNDGTIMTISKD). The Cytoplasmic segment spans residues 694-709 (RVKPSPTPDCWKLKEI). Residues 710 to 730 (FATGVVLGAYLAIMTVVFFWA) form a helical membrane-spanning segment. Residues 731 to 764 (AYETNFFHNIFHVRNFNQHHFKMKDKKVAAHLNE) are Extracellular-facing. The chain crosses the membrane as a helical span at residues 765-785 (QMASAVYLQVSTISQALIFVT). At 786–797 (RSRSWSFVERPG) the chain is on the cytoplasmic side. A helical transmembrane segment spans residues 798-818 (FLLVIAFLIAQLVASVISAMA). Over 819–826 (NWPFAGIR) the chain is Extracellular. The chain crosses the membrane as a helical span at residues 827 to 847 (SIGWGWTGVIWIFNIVTYMLL). The Cytoplasmic portion of the chain corresponds to 848 to 961 (DPIKFLVRYA…EDPNSNNYTI (114 aa)). Threonine 894 is subject to Phosphothreonine. Serine 910 and serine 942 each carry phosphoserine. Positions 959 to 961 (YTI) are interaction with 14-3-3 proteins. Threonine 960 carries the post-translational modification Phosphothreonine.

This sequence belongs to the cation transport ATPase (P-type) (TC 3.A.3) family. Type IIIA subfamily. In terms of assembly, binds to 14-3-3 proteins. The binding is induced by phosphorylation of Thr-960. Binding to 14-3-3 proteins activates the H(+)-ATPase. As to expression, expressed in guard cells, roots and leaves, and barely in mesophyll cells.

Its subcellular location is the membrane. It catalyses the reaction ATP + H2O + H(+)(in) = ADP + phosphate + 2 H(+)(out). In terms of biological role, the plasma membrane H(+) ATPase of plants and fungi generates a proton gradient that drives the active transport of nutrients by H(+)-symport. The resulting external acidification and/or internal alkinization may mediate growth responses. The chain is ATPase 7, plasma membrane-type (AHA7) from Arabidopsis thaliana (Mouse-ear cress).